The sequence spans 119 residues: Ribosome-binding factor A (119 aa).

Belongs to the RbfA family. As to quaternary structure, monomer. Binds 30S ribosomal subunits, but not 50S ribosomal subunits or 70S ribosomes.

It localises to the cytoplasm. Its function is as follows. One of several proteins that assist in the late maturation steps of the functional core of the 30S ribosomal subunit. Associates with free 30S ribosomal subunits (but not with 30S subunits that are part of 70S ribosomes or polysomes). Required for efficient processing of 16S rRNA. May interact with the 5'-terminal helix region of 16S rRNA. This is Ribosome-binding factor A from Pelodictyon phaeoclathratiforme (strain DSM 5477 / BU-1).